The sequence spans 264 residues: Occludin/ELL domain-containing protein 1 (264 aa).

Polar residues predominate over residues 1 to 10 (MHNPDGSASP). The disordered stretch occupies residues 1 to 112 (MHNPDGSASP…QPGPHKAKTK (112 aa)). Over residues 96–105 (PRPPCQPQPG) the composition is skewed to pro residues. One can recognise an OCEL domain in the interval 147-257 (PDYELKYPPV…QIQKFDDQGD (111 aa)).

It belongs to the ELL/occludin family.

In Homo sapiens (Human), this protein is Occludin/ELL domain-containing protein 1 (OCEL1).